Consider the following 523-residue polypeptide: Acetyl-CoA hydrolase (523 aa).

CoA is bound at residue 277–281; that stretch reads GIGNI. The active-site 5-glutamyl coenzyme A thioester intermediate is Glu-302. CoA-binding residues include Asn-392 and Gly-396.

Belongs to the acetyl-CoA hydrolase/transferase family.

The protein resides in the cytoplasm. The enzyme catalyses acetyl-CoA + H2O = acetate + CoA + H(+). In terms of biological role, presumably involved in regulating the intracellular acetyl-CoA pool for fatty acid and cholesterol synthesis and fatty acid oxidation. This chain is Acetyl-CoA hydrolase (ACH1), found in Kluyveromyces lactis (strain ATCC 8585 / CBS 2359 / DSM 70799 / NBRC 1267 / NRRL Y-1140 / WM37) (Yeast).